We begin with the raw amino-acid sequence, 345 residues long: N-malonyltransferase FDB2 (345 aa).

Cys-110 acts as the Acyl-thioester intermediate in catalysis. His-158 functions as the Proton acceptor in the catalytic mechanism. Asp-173 is a catalytic residue.

It belongs to the arylamine N-acetyltransferase family.

The protein operates within xenobiotic degradation. N-malonyltransferase; part of the Fusarium detoxification of benzoxazolinone cluster 2 (FDB2) involved in the degradation of benzoxazolinones produced by the host plant. Maize, wheat, and rye produce the 2 benzoxazinone phytoanticipins 2,4-dihy-droxy-7-methoxy-1,4-benzoxazin-3-one (DIMBOA) and 2,4-dihydroxy-1,4-benzoxazin-3-one (DIBOA) that, due to their inherent instability once released, spontaneously degrade to the more stable corresponding benzoxazolinones, 6-methoxy-2-benzoxazolinone (MBOA) and 2-benzoxazolinone (BOA), respectively. The first step in the detoxification of benzoxazolinones involves the hydrolysis of the cyclic ester bond of benzoxazolinones by the FDB1 cluster gamma-lactamase MBL1 to aminophenols. MBL1 is able to convert BOA into 2-aminophenol (2-AP), as well as MBOA into 5-methoxy-2-aminophenol (2-AMP). The FDB2 cluster N-malonyltransferase FDB2/NAT1 then metabolizes aminophenols via N-malonylation to non-toxic malonamic acids. FDB2/NAT1 converts 2-AP into N-(2-hydroxyphenyl) malonamic acid (HPMA) and 2-AMP into N-(2-hydroxy-4-methoxyphenyl) malonamic acid (HMPMA). The duplicated dienlactone hydrolases DLH1 and DLH2 may provide redundant function for hydrolyzing the lactone moiety in the BOA molecule. The roles of the amidases an other enzymes encoded by the 2 FDB clusters have not been identified so far. In Gibberella moniliformis (strain M3125 / FGSC 7600) (Maize ear and stalk rot fungus), this protein is N-malonyltransferase FDB2.